The chain runs to 123 residues: Large ribosomal subunit protein uL29 (123 aa).

The protein belongs to the universal ribosomal protein uL29 family. As to quaternary structure, component of the large ribosomal subunit.

It is found in the cytoplasm. Component of the large ribosomal subunit. The ribosome is a large ribonucleoprotein complex responsible for the synthesis of proteins in the cell. This chain is Large ribosomal subunit protein uL29 (rpl35), found in Platichthys flesus (European flounder).